The sequence spans 447 residues: N-succinylarginine dihydrolase (447 aa).

Substrate-binding positions include alanine 19–serine 28, asparagine 110, and histidine 137–arginine 138. Residue glutamate 174 is part of the active site. Residue arginine 212 participates in substrate binding. Histidine 248 is an active-site residue. Positions 250 and 359 each coordinate substrate. Cysteine 365 acts as the Nucleophile in catalysis.

It belongs to the succinylarginine dihydrolase family. In terms of assembly, homodimer.

It carries out the reaction N(2)-succinyl-L-arginine + 2 H2O + 2 H(+) = N(2)-succinyl-L-ornithine + 2 NH4(+) + CO2. Its pathway is amino-acid degradation; L-arginine degradation via AST pathway; L-glutamate and succinate from L-arginine: step 2/5. Functionally, catalyzes the hydrolysis of N(2)-succinylarginine into N(2)-succinylornithine, ammonia and CO(2). This Salmonella paratyphi B (strain ATCC BAA-1250 / SPB7) protein is N-succinylarginine dihydrolase.